The primary structure comprises 184 residues: UPF0149 protein PP_5201 (184 aa).

Belongs to the UPF0149 family.

In Pseudomonas putida (strain ATCC 47054 / DSM 6125 / CFBP 8728 / NCIMB 11950 / KT2440), this protein is UPF0149 protein PP_5201.